The primary structure comprises 228 residues: Ephrin-A5b (228 aa).

The N-terminal stretch at 1–20 (MLQAEMIVFVGVILWMCVFS) is a signal peptide. In terms of domain architecture, Ephrin RBD spans 29 to 162 (ADRYAVFWNR…KLKVFVRPPN (134 aa)). N-linked (GlcNAc...) asparagine glycosylation is present at Asn37. Cystine bridges form between Cys62/Cys102 and Cys90/Cys151. The span at 184–198 (LEPRDDTSHEAEPSR) shows a compositional bias: basic and acidic residues. The segment at 184-205 (LEPRDDTSHEAEPSRSDVSTSG) is disordered. The GPI-anchor amidated serine moiety is linked to residue Ser204. Residues 205–228 (GLRHQTSRPLLALLLLCISLYLLL) constitute a propeptide, removed in mature form.

The protein belongs to the ephrin family. In terms of tissue distribution, widespread expression in the embryo.

Its subcellular location is the cell membrane. Its function is as follows. Cell surface GPI-bound ligand for Eph receptors, a family of receptor tyrosine kinases which are crucial for migration, repulsion and adhesion during neuronal, vascular and epithelial development. Binds promiscuously Eph receptors residing on adjacent cells, leading to contact-dependent bidirectional signaling into neighboring cells. Induces compartmentalized signaling within a caveolae-like membrane microdomain when bound to the extracellular domain of its cognate receptor. This signaling event requires the activity of the Fyn tyrosine kinase. Activates the epha3 receptor to regulate cell-cell adhesion and cytoskeletal organization. With the receptor epha2 may regulate lens fiber cells shape and interactions and be important for lens transparency maintenance. May function actively to stimulate axon fasciculation. Controls axon growth and may be involved in the creation of the retino-tectal map. The protein is Ephrin-A5b (efna5b) of Danio rerio (Zebrafish).